A 131-amino-acid chain; its full sequence is Profilin-9 (131 aa).

Cysteines 13 and 115 form a disulfide. Positions 81–97 (AVIRGKKGSGGITVKKT) match the Involved in PIP2 interaction motif. Threonine 111 bears the Phosphothreonine mark.

It belongs to the profilin family. As to quaternary structure, occurs in many kinds of cells as a complex with monomeric actin in a 1:1 ratio. Post-translationally, phosphorylated by MAP kinases.

The protein resides in the cytoplasm. The protein localises to the cytoskeleton. Binds to actin and affects the structure of the cytoskeleton. At high concentrations, profilin prevents the polymerization of actin, whereas it enhances it at low concentrations. This Zea mays (Maize) protein is Profilin-9.